Consider the following 474-residue polypeptide: 2-succinylbenzoate--CoA ligase (474 aa).

The protein belongs to the ATP-dependent AMP-binding enzyme family. MenE subfamily.

It catalyses the reaction 2-succinylbenzoate + ATP + CoA = 2-succinylbenzoyl-CoA + AMP + diphosphate. It functions in the pathway quinol/quinone metabolism; 1,4-dihydroxy-2-naphthoate biosynthesis; 1,4-dihydroxy-2-naphthoate from chorismate: step 5/7. It participates in quinol/quinone metabolism; menaquinone biosynthesis. Functionally, converts 2-succinylbenzoate (OSB) to 2-succinylbenzoyl-CoA (OSB-CoA). In Staphylococcus epidermidis (strain ATCC 12228 / FDA PCI 1200), this protein is 2-succinylbenzoate--CoA ligase.